A 245-amino-acid polypeptide reads, in one-letter code: tRNA pseudouridine synthase A (245 aa).

Asp-52 (nucleophile) is an active-site residue. Tyr-111 is a substrate binding site.

The protein belongs to the tRNA pseudouridine synthase TruA family. In terms of assembly, homodimer.

It catalyses the reaction uridine(38/39/40) in tRNA = pseudouridine(38/39/40) in tRNA. Functionally, formation of pseudouridine at positions 38, 39 and 40 in the anticodon stem and loop of transfer RNAs. The chain is tRNA pseudouridine synthase A from Afipia carboxidovorans (strain ATCC 49405 / DSM 1227 / KCTC 32145 / OM5) (Oligotropha carboxidovorans).